We begin with the raw amino-acid sequence, 129 residues long: uncharacterized protein (129 aa).

This is an uncharacterized protein from Lepidoptera (butterflies and moths).